We begin with the raw amino-acid sequence, 59 residues long: Large ribosomal subunit protein uL30 (59 aa).

The protein belongs to the universal ribosomal protein uL30 family. In terms of assembly, part of the 50S ribosomal subunit.

This is Large ribosomal subunit protein uL30 from Solidesulfovibrio magneticus (strain ATCC 700980 / DSM 13731 / RS-1) (Desulfovibrio magneticus).